The sequence spans 686 residues: Methionine--tRNA ligase (686 aa).

The 'HIGH' region signature appears at 15–25 (PYANGPIHLGH). 4 residues coordinate Zn(2+): Cys-146, Cys-149, Cys-159, and Cys-162. The short motif at 332 to 336 (KMSKS) is the 'KMSKS' region element. Residue Lys-335 coordinates ATP. One can recognise a tRNA-binding domain in the interval 585–686 (TFAKTDLRVA…DGAKPGQRIM (102 aa)).

Belongs to the class-I aminoacyl-tRNA synthetase family. MetG type 1 subfamily. Homodimer. Zn(2+) is required as a cofactor.

The protein localises to the cytoplasm. The enzyme catalyses tRNA(Met) + L-methionine + ATP = L-methionyl-tRNA(Met) + AMP + diphosphate. Its function is as follows. Is required not only for elongation of protein synthesis but also for the initiation of all mRNA translation through initiator tRNA(fMet) aminoacylation. In Psychromonas ingrahamii (strain DSM 17664 / CCUG 51855 / 37), this protein is Methionine--tRNA ligase.